The sequence spans 357 residues: Holliday junction branch migration complex subunit RuvB (357 aa).

The tract at residues 1–27 (MGRFDDAGAQDAEPDDRDVSPALTVGE) is disordered. The interval 1–195 (MGRFDDAGAQ…FGFTAHMDFY (195 aa)) is large ATPase domain (RuvB-L). Residues Leu34, Arg35, Gly76, Lys79, Thr80, Ser81, 142 to 144 (EDF), Arg185, Tyr195, and Arg232 each bind ATP. Thr80 is a Mg(2+) binding site. Residues 196 to 266 (EPAELERVLA…IAKAALEVYD (71 aa)) form a small ATPAse domain (RuvB-S) region. The head domain (RuvB-H) stretch occupies residues 269–357 (ELGLDRLDRA…TGLGQTGLFD (89 aa)). Residues Arg324 and Arg329 each contribute to the DNA site.

Belongs to the RuvB family. In terms of assembly, homohexamer. Forms an RuvA(8)-RuvB(12)-Holliday junction (HJ) complex. HJ DNA is sandwiched between 2 RuvA tetramers; dsDNA enters through RuvA and exits via RuvB. An RuvB hexamer assembles on each DNA strand where it exits the tetramer. Each RuvB hexamer is contacted by two RuvA subunits (via domain III) on 2 adjacent RuvB subunits; this complex drives branch migration. In the full resolvosome a probable DNA-RuvA(4)-RuvB(12)-RuvC(2) complex forms which resolves the HJ.

It localises to the cytoplasm. The enzyme catalyses ATP + H2O = ADP + phosphate + H(+). Its function is as follows. The RuvA-RuvB-RuvC complex processes Holliday junction (HJ) DNA during genetic recombination and DNA repair, while the RuvA-RuvB complex plays an important role in the rescue of blocked DNA replication forks via replication fork reversal (RFR). RuvA specifically binds to HJ cruciform DNA, conferring on it an open structure. The RuvB hexamer acts as an ATP-dependent pump, pulling dsDNA into and through the RuvAB complex. RuvB forms 2 homohexamers on either side of HJ DNA bound by 1 or 2 RuvA tetramers; 4 subunits per hexamer contact DNA at a time. Coordinated motions by a converter formed by DNA-disengaged RuvB subunits stimulates ATP hydrolysis and nucleotide exchange. Immobilization of the converter enables RuvB to convert the ATP-contained energy into a lever motion, pulling 2 nucleotides of DNA out of the RuvA tetramer per ATP hydrolyzed, thus driving DNA branch migration. The RuvB motors rotate together with the DNA substrate, which together with the progressing nucleotide cycle form the mechanistic basis for DNA recombination by continuous HJ branch migration. Branch migration allows RuvC to scan DNA until it finds its consensus sequence, where it cleaves and resolves cruciform DNA. The polypeptide is Holliday junction branch migration complex subunit RuvB (Mycobacterium sp. (strain JLS)).